A 467-amino-acid polypeptide reads, in one-letter code: Argininosuccinate lyase (467 aa).

This sequence belongs to the lyase 1 family. Argininosuccinate lyase subfamily.

It localises to the cytoplasm. It carries out the reaction 2-(N(omega)-L-arginino)succinate = fumarate + L-arginine. It functions in the pathway amino-acid biosynthesis; L-arginine biosynthesis; L-arginine from L-ornithine and carbamoyl phosphate: step 3/3. In Thioalkalivibrio sulfidiphilus (strain HL-EbGR7), this protein is Argininosuccinate lyase.